A 233-amino-acid chain; its full sequence is Ribosome-recycling factor, mitochondrial (233 aa).

This sequence belongs to the RRF family.

The protein localises to the mitochondrion. In terms of biological role, necessary for protein synthesis in mitochondria. Functions as a ribosome recycling factor in mitochondria. In Candida glabrata (strain ATCC 2001 / BCRC 20586 / JCM 3761 / NBRC 0622 / NRRL Y-65 / CBS 138) (Yeast), this protein is Ribosome-recycling factor, mitochondrial (RRF1).